Consider the following 155-residue polypeptide: 6,7-dimethyl-8-ribityllumazine synthase (155 aa).

5-amino-6-(D-ribitylamino)uracil is bound by residues F23, 57-59 (AFE), and 81-83 (AVI). Residue 86–87 (ST) participates in (2S)-2-hydroxy-3-oxobutyl phosphate binding. Catalysis depends on H89, which acts as the Proton donor. Residue F114 participates in 5-amino-6-(D-ribitylamino)uracil binding. R128 provides a ligand contact to (2S)-2-hydroxy-3-oxobutyl phosphate.

It belongs to the DMRL synthase family.

It carries out the reaction (2S)-2-hydroxy-3-oxobutyl phosphate + 5-amino-6-(D-ribitylamino)uracil = 6,7-dimethyl-8-(1-D-ribityl)lumazine + phosphate + 2 H2O + H(+). It functions in the pathway cofactor biosynthesis; riboflavin biosynthesis; riboflavin from 2-hydroxy-3-oxobutyl phosphate and 5-amino-6-(D-ribitylamino)uracil: step 1/2. Functionally, catalyzes the formation of 6,7-dimethyl-8-ribityllumazine by condensation of 5-amino-6-(D-ribitylamino)uracil with 3,4-dihydroxy-2-butanone 4-phosphate. This is the penultimate step in the biosynthesis of riboflavin. The sequence is that of 6,7-dimethyl-8-ribityllumazine synthase from Geobacter sulfurreducens (strain ATCC 51573 / DSM 12127 / PCA).